A 977-amino-acid chain; its full sequence is Receptor-like protein kinase 7 (977 aa).

Residues 1-28 (MAPSLRNFNFFHRFSTFLVFSLFSVVSS) form the signal peptide. At 29 to 608 (DDLQVLLKLK…NPSRSHGDTR (580 aa)) the chain is on the extracellular side. LRR repeat units follow at residues 71–95 (RGNVTEIDLSRRGLSGNFPFDSVCE), 96–119 (IQSLEKLSLGFNSLSGIIPSDLKN), and 121–145 (TSLKYLDLGNNLFSGAFPEFSSLNQ). 2 N-linked (GlcNAc...) asparagine glycosylation sites follow: Asn-73 and Asn-119. N-linked (GlcNAc...) asparagine glycans are attached at residues Asn-152 and Asn-167. LRR repeat units lie at residues 168–194 (ATSLVVLSLGDNPFDATADFPVEVVSL), 195–218 (KKLSWLYLSNCSIAGKIPPAIGDL), 219–242 (TELRNLEISDSGLTGEIPSEISKL), 244–265 (NLWQLELYNNSLTGKLPTGFGN), 267–289 (KNLTYLDASTNLLQGDLSELRSL), 290–312 (TNLVSLQMFENEFSGEIPLEFGE), 313–337 (FKDLVNLSLYTNKLTGSLPQGLGSL), 339–361 (DFDFIDASENLLTGPIPPDMCKN), 362–385 (GKMKALLLLQNNLTGSIPESYANC), 386–409 (LTLQRFRVSENNLNGTVPAGLWGL), 411–433 (KLEIIDIEMNNFEGPITADIKNG), 434–457 (KMLGALYLGFNKLSDELPEEIGDT), 458–481 (ESLTKVELNNNRFTGKIPSSIGKL), 482–505 (KGLSSLKMQSNGFSGEIPDSIGSC), 507–529 (MLSDVNMAQNSISGEIPHTLGSL), 530–553 (PTLNALNLSDNKLSGRIPESLSSL), and 555–578 (LSLLDLSNNRLSGRIPLSLSSYNG). Asn-204 carries an N-linked (GlcNAc...) asparagine glycan. 2 N-linked (GlcNAc...) asparagine glycosylation sites follow: Asn-252 and Asn-268. A glycan (N-linked (GlcNAc...) asparagine) is linked at Asn-318. N-linked (GlcNAc...) asparagine glycosylation is found at Asn-373 and Asn-399. Asn-536 and Asn-577 each carry an N-linked (GlcNAc...) asparagine glycan. A helical transmembrane segment spans residues 609-629 (VFVLCIVFGLLILLASLVFFL). At 630–977 (YLKKTEKKEG…ESDVKVKEIS (348 aa)) the chain is on the cytoplasmic side. The 294-residue stretch at 666-959 (IKEENLIGRG…QMIEDAEPCR (294 aa)) folds into the Protein kinase domain. ATP-binding positions include 672-680 (IGRGGCGDV) and Lys-694. The Proton acceptor role is filled by Asp-805.

This sequence belongs to the protein kinase superfamily. Ser/Thr protein kinase family. In terms of assembly, interacts with PIP1. As to expression, expressed in roots, stems and dry seeds. Expressed at junctions between organs, such as the insertion zones of stamens, petals and sepals, the transition zones of floral stem and pedicel, pedicel and silique, and floral stem and cauline leaves.

Its subcellular location is the membrane. The enzyme catalyses L-seryl-[protein] + ATP = O-phospho-L-seryl-[protein] + ADP + H(+). It carries out the reaction L-threonyl-[protein] + ATP = O-phospho-L-threonyl-[protein] + ADP + H(+). Plays a role in pattern-triggered immunity (PTI) signaling induced by pathogen-associated molecular patterns (PAMPs). Acts as a receptor for PIP1 defense peptide. PIP1 is an endogenous secreted peptide that acts as elicitor of immune response and positive regulator of defense response. Involved in the control of seed germination speed, in tolerance to oxidative stress and in maintaining seed longevity. This chain is Receptor-like protein kinase 7, found in Arabidopsis thaliana (Mouse-ear cress).